The primary structure comprises 95 residues: Small ribosomal subunit protein uS19 (95 aa).

The interval 73 to 95 (EFSPTRSYRGHGADKNAKGSKKK) is disordered.

This sequence belongs to the universal ribosomal protein uS19 family.

Its function is as follows. Protein S19 forms a complex with S13 that binds strongly to the 16S ribosomal RNA. The polypeptide is Small ribosomal subunit protein uS19 (Deinococcus deserti (strain DSM 17065 / CIP 109153 / LMG 22923 / VCD115)).